The following is a 209-amino-acid chain: Protease (209 aa).

Active-site residues include His-55, Asp-72, and Cys-123.

The protein belongs to the peptidase C5 family. As to quaternary structure, interacts with protease cofactor pVI-C; this interaction is necessary for protease activation.

It localises to the virion. The protein resides in the host nucleus. The enzyme catalyses Cleaves proteins of the adenovirus and its host cell at two consensus sites: -Yaa-Xaa-Gly-Gly-|-Xaa- and -Yaa-Xaa-Gly-Xaa-|-Gly- (in which Yaa is Met, Ile or Leu, and Xaa is any amino acid).. With respect to regulation, requires DNA and protease cofactor for maximal activation. Inside nascent virions, becomes partially activated by binding to the viral DNA, allowing it to cleave the cofactor that binds to the protease and fully activates it. Actin, like the viral protease cofactor, seems to act as a cofactor in the cleavage of cytokeratin 18 and of actin itself. Functionally, cleaves viral precursor proteins (pTP, pIIIa, pVI, pVII, pVIII, and pX) inside newly assembled particles giving rise to mature virions. Protease complexed to its cofactor slides along the viral DNA to specifically locate and cleave the viral precursors. Mature virions have a weakened organization compared to the unmature virions, thereby facilitating subsequent uncoating. Without maturation, the particle lacks infectivity and is unable to uncoat. Late in adenovirus infection, in the cytoplasm, may participate in the cytoskeleton destruction. Cleaves host cell cytoskeletal keratins K7 and K18. The polypeptide is Protease (Human adenovirus D serotype 9 (HAdV-9)).